The primary structure comprises 504 residues: uncharacterized protein (504 aa).

A helical transmembrane segment spans residues 6-26; it reads NLFIIFIFLFLLSQVSAYITF.

It to M.jannaschii MJ1506 and MJ1561.

It is found in the membrane. This is an uncharacterized protein from Methanocaldococcus jannaschii (strain ATCC 43067 / DSM 2661 / JAL-1 / JCM 10045 / NBRC 100440) (Methanococcus jannaschii).